Consider the following 790-residue polypeptide: Phenylalanine--tRNA ligase beta subunit (790 aa).

One can recognise a tRNA-binding domain in the interval 39-154 (PDSLNTVVTG…ADTPLGESAC (116 aa)). In terms of domain architecture, B5 spans 404–483 (FSPLSLSVRP…FVQKTQKILP (80 aa)). The Mg(2+) site is built by aspartate 457, aspartate 463, glutamate 466, and glutamate 467. The FDX-ACB domain occupies 694 to 790 (PIYPASSRDI…KLANIGQGNS (97 aa)).

Belongs to the phenylalanyl-tRNA synthetase beta subunit family. Type 1 subfamily. As to quaternary structure, tetramer of two alpha and two beta subunits. Mg(2+) serves as cofactor.

It is found in the cytoplasm. It carries out the reaction tRNA(Phe) + L-phenylalanine + ATP = L-phenylalanyl-tRNA(Phe) + AMP + diphosphate + H(+). In Chlamydia trachomatis serovar D (strain ATCC VR-885 / DSM 19411 / UW-3/Cx), this protein is Phenylalanine--tRNA ligase beta subunit (pheT).